We begin with the raw amino-acid sequence, 225 residues long: Small ribosomal subunit protein eS1 (225 aa).

Positions 206–216 are enriched in acidic residues; that stretch reads PVEEPAAEEVA. Positions 206–225 are disordered; sequence PVEEPAAEEVAEAPAAETQE.

The protein belongs to the eukaryotic ribosomal protein eS1 family.

The protein is Small ribosomal subunit protein eS1 of Methanococcus maripaludis (strain C5 / ATCC BAA-1333).